A 1835-amino-acid chain; its full sequence is Urea amidolyase (1835 aa).

ATP is bound by residues Gly122 to Thr129 and Lys747. The Biotin carboxylation domain maps to Leu632–Tyr1075. The region spanning Arg751–Ala948 is the ATP-grasp domain. At Ser803 the chain carries Phosphoserine. The ATP site is built by Glu830 and Asn865. The 79-residue stretch at Asp1754–Glu1832 folds into the Biotinyl-binding domain. Lys1798 is modified (N6-biotinyllysine).

Monomer. Requires biotin as cofactor.

The catalysed reaction is urea + hydrogencarbonate + ATP = urea-1-carboxylate + ADP + phosphate + H(+). The enzyme catalyses urea-1-carboxylate + H2O + 3 H(+) = 2 NH4(+) + 2 CO2. It functions in the pathway nitrogen metabolism; urea degradation; CO(2) and NH(3) from urea (allophanate route): step 1/2. Its pathway is nitrogen metabolism; urea degradation; CO(2) and NH(3) from urea (allophanate route): step 2/2. Functionally, hydrolysis of urea to ammonia and CO(2). The protein is Urea amidolyase (DUR1,2) of Saccharomyces cerevisiae (strain ATCC 204508 / S288c) (Baker's yeast).